The sequence spans 98 residues: ATP synthase subunit c (98 aa).

The next 2 helical transmembrane spans lie at 27–47 and 73–93; these read ALAL…GLGL and IIGA…FFVV.

This sequence belongs to the ATPase C chain family. As to quaternary structure, F-type ATPases have 2 components, F(1) - the catalytic core - and F(0) - the membrane proton channel. F(1) has five subunits: alpha(3), beta(3), gamma(1), delta(1), epsilon(1). F(0) has three main subunits: a(1), b(2) and c(10-14). The alpha and beta chains form an alternating ring which encloses part of the gamma chain. F(1) is attached to F(0) by a central stalk formed by the gamma and epsilon chains, while a peripheral stalk is formed by the delta and b chains.

It is found in the cell inner membrane. In terms of biological role, f(1)F(0) ATP synthase produces ATP from ADP in the presence of a proton or sodium gradient. F-type ATPases consist of two structural domains, F(1) containing the extramembraneous catalytic core and F(0) containing the membrane proton channel, linked together by a central stalk and a peripheral stalk. During catalysis, ATP synthesis in the catalytic domain of F(1) is coupled via a rotary mechanism of the central stalk subunits to proton translocation. Its function is as follows. Key component of the F(0) channel; it plays a direct role in translocation across the membrane. A homomeric c-ring of between 10-14 subunits forms the central stalk rotor element with the F(1) delta and epsilon subunits. The polypeptide is ATP synthase subunit c (Protochlamydia amoebophila (strain UWE25)).